Reading from the N-terminus, the 83-residue chain is U25-theraphotoxin-Cg1b (83 aa).

The N-terminal stretch at 1–23 is a signal peptide; the sequence is MRFHTLLFLSFLLLVSCALICTA. Positions 24–48 are excised as a propeptide; it reads QHPGLEKSGMFHENVGKGQHIEEKR. 3 cysteine pairs are disulfide-bonded: C50–C66, C57–C71, and C65–C79.

Belongs to the neurotoxin 07 (Beta/delta-agtx) family. 03 (aga-4) subfamily. JZTX sub-subfamily. Expressed by the venom gland.

The protein localises to the secreted. Functionally, probable ion channel inhibitor. The chain is U25-theraphotoxin-Cg1b from Chilobrachys guangxiensis (Chinese earth tiger tarantula).